The chain runs to 185 residues: Probable chorismate pyruvate-lyase (185 aa).

Residues Arg75, Leu113, and Glu174 each contribute to the substrate site.

It belongs to the UbiC family.

It is found in the cytoplasm. It carries out the reaction chorismate = 4-hydroxybenzoate + pyruvate. The protein operates within cofactor biosynthesis; ubiquinone biosynthesis. Removes the pyruvyl group from chorismate, with concomitant aromatization of the ring, to provide 4-hydroxybenzoate (4HB) for the ubiquinone pathway. In Aromatoleum aromaticum (strain DSM 19018 / LMG 30748 / EbN1) (Azoarcus sp. (strain EbN1)), this protein is Probable chorismate pyruvate-lyase.